A 257-amino-acid polypeptide reads, in one-letter code: Snake venom serine protease rhinocerase 4 (257 aa).

The first 17 residues, 1 to 17 (VLIRVLANLLVLQLSYA), serve as a signal peptide directing secretion. Residues 18–23 (QKSSEL) constitute a propeptide that is removed on maturation. The Peptidase S1 domain occupies 24 to 248 (VIGGAECNIN…YTDWIRSIIG (225 aa)). 6 cysteine pairs are disulfide-bonded: Cys-30-Cys-162, Cys-49-Cys-65, Cys-97-Cys-255, Cys-141-Cys-209, Cys-173-Cys-188, and Cys-199-Cys-224. Asn-43 is a glycosylation site (N-linked (GlcNAc...) asparagine). The active-site Charge relay system is the His-64. 2 N-linked (GlcNAc...) asparagine glycosylation sites follow: Asn-78 and Asn-100. Residue Asp-109 is the Charge relay system of the active site. The Charge relay system role is filled by Ser-203. Residue Asn-250 is glycosylated (N-linked (GlcNAc...) asparagine).

The protein belongs to the peptidase S1 family. Snake venom subfamily. In terms of tissue distribution, expressed by the venom gland.

Its subcellular location is the secreted. In terms of biological role, snake venom serine protease that may act in the hemostasis system of the prey. The protein is Snake venom serine protease rhinocerase 4 of Bitis rhinoceros (West African gaboon viper).